The chain runs to 185 residues: Large ribosomal subunit protein uL16m (185 aa).

This sequence belongs to the universal ribosomal protein uL16 family.

It localises to the mitochondrion. The sequence is that of Large ribosomal subunit protein uL16m (RPL16) from Oryza sativa subsp. japonica (Rice).